The sequence spans 456 residues: MVLESFSASLRETIRKITGSSYIDKETVKEISKDLQRILLKADVNVKTVLQVTKEMERRALEEKPPAGMAHQDYMVRIIYEELLKILGEPSNVKLKPQTIMLVGLYGNGKTTTAGKLARFFAKKGLNSGLIAADVHRYAAYDQLKQIASEVNAKFYGDQSEKDPVRLIKHGLEQLKDVAVKIIDTSGRDSMDAELFDEIRRIKEAVAPDEVLMIIDATMGQQAGPEAKAFNDAIGVTGIIITKMDGTAKGGGALSAVAEIHVPIYFIGTGEHMDDLEVFDPKKFLSRLLGLGDLESLFETVQEADITEEEAQESFEKLMTGKFNLKDMYDVWEKFSKPGLMKKLVDALPLARIPGSQKIDDSKIQSAEDKLRMYRIIMDSMTFEELENPEIINAKRITRIARGAGVREEDVRMLLKEFKAMKNNMKMMKGNRGLKKMLQANFRSGNFGLEDLGIKE.

Residues 104-111, 184-188, and 242-245 each bind GTP; these read GLYGNGKT, DTSGR, and TKMD.

The protein belongs to the GTP-binding SRP family. SRP54 subfamily. Part of the signal recognition particle protein translocation system, which is composed of SRP and FtsY. Archaeal SRP consists of a 7S RNA molecule of 300 nucleotides and two protein subunits: SRP54 and SRP19.

It is found in the cytoplasm. It carries out the reaction GTP + H2O = GDP + phosphate + H(+). Involved in targeting and insertion of nascent membrane proteins into the cytoplasmic membrane. Binds to the hydrophobic signal sequence of the ribosome-nascent chain (RNC) as it emerges from the ribosomes. The SRP-RNC complex is then targeted to the cytoplasmic membrane where it interacts with the SRP receptor FtsY. The protein is Signal recognition particle 54 kDa protein of Thermoplasma acidophilum (strain ATCC 25905 / DSM 1728 / JCM 9062 / NBRC 15155 / AMRC-C165).